Here is a 256-residue protein sequence, read N- to C-terminus: Small ribosomal subunit protein uS2 (256 aa).

It belongs to the universal ribosomal protein uS2 family.

This chain is Small ribosomal subunit protein uS2, found in Streptococcus equi subsp. equi (strain 4047).